The chain runs to 383 residues: Na(+)/H(+) antiporter NhaA (383 aa).

A run of 11 helical transmembrane segments spans residues 14–34, 47–67, 87–107, 117–137, 146–166, 171–191, 205–225, 252–272, 280–300, 321–341, and 356–376; these read AGGILLVIAAAIAMTIANSPL, FGMSVSHWINDGLMAVFFLLI, IFPAIAAVGGMLAPALIYVAF, GWAIPAATDIAFALGIMALLG, VFLLALAIIDDLGVVVIIALF, LSSMALLVGFVMTGVLFMLNA, AILWFAVLKSGVHATLAGVVI, VAFGILPLFAFANAGISLEGV, MLPLGIALGLLIGKPLGIFSF, IFAVSVLCGIGFTMSIFISSL, and LGILMGSTTAAVLGYALLHFS.

It belongs to the NhaA Na(+)/H(+) (TC 2.A.33) antiporter family.

It localises to the cell inner membrane. It catalyses the reaction Na(+)(in) + 2 H(+)(out) = Na(+)(out) + 2 H(+)(in). The catalysed reaction is Li(+)(in) + 2 H(+)(out) = Li(+)(out) + 2 H(+)(in). Activity is regulated by pH. Active at alkaline pH. Amiloride strongly reduces affinity for Na(+), but does not change the Vmax. Functionally, na(+)/H(+) antiporter that extrudes sodium in exchange for external protons. Can also transport lithium and potassium. This Vibrio parahaemolyticus serotype O3:K6 (strain RIMD 2210633) protein is Na(+)/H(+) antiporter NhaA.